Consider the following 515-residue polypeptide: Cytochrome P450 monooxygenase mfmA (515 aa).

The chain crosses the membrane as a helical span at residues lysine 3 to glycine 23. Cysteine 453 lines the heme pocket.

The protein belongs to the cytochrome P450 family. Heme is required as a cofactor.

It is found in the membrane. It functions in the pathway secondary metabolite biosynthesis; terpenoid biosynthesis. In terms of biological role, cytochrome P450 monooxygenase; part of the gene cluster that mediates the biosynthesis of the phthalide-terpenoid hybrid 11'-O-desmethylfendlerol. Within the pathway, mfma and mfmC act together to convert 3,5-dimethylorsellinic acid (DMOA) into the phthalide 5,7-dihydroxy-4-(hydroxymethyl)-6-methylphthalide. MfmA performs especially an hydroxylation at C-9. The biosynthesis of 11'-O-desmethylfendlerol begins with the NR-PKS mfmB that forms 3,5-dimethylorsellinic acid (DMOA), which is then transformed into the phthalide 5,7-dihydroxy-4-(hydroxymethyl)-6-methylphthalide by the cytochrome P450 monooxygenase mfmA and the hydrolase mfmC. Subsequently, the methyltransferase mfmE catalyzes 7-O-methylation to yield 5-hydroxy-4-(hydroxymethyl)-7-methoxy-6-methylphthalide, which undergoes C-3 hydroxylation by the cytochrome P450 monooxygenase mfmF. The resultant cyclopolic acid (2,5-dihydroxy-4-(hydroxymethyl)-7-methoxy-6-methylphthalide) is then farnesylated by the DMATS-type prenyltransferase mfmD to afford 5-O-farnesylcyclopolic acid. Finally, the Pyr4-family terpene cyclase mfmH cyclizes the farnesyl moiety of 5-O-farnesylcyclopolic acid into a drimane-like structure, thus completing the biosynthesis of 11'-O-desmethylfendlerol. This is Cytochrome P450 monooxygenase mfmA from Annulohypoxylon moriforme (Filamentous fungus).